The sequence spans 76 residues: uncharacterized protein (76 aa).

The interval 27 to 76 (SINNGEGSSVVHRDATAPPTPPVVPTSTLQVPGLQRARTPEPNDPRVANL) is disordered.

This is an uncharacterized protein from Caenorhabditis elegans.